Consider the following 364-residue polypeptide: Nicotinate-nucleotide--dimethylbenzimidazole phosphoribosyltransferase (364 aa).

Glutamate 332 functions as the Proton acceptor in the catalytic mechanism.

It belongs to the CobT family.

It catalyses the reaction 5,6-dimethylbenzimidazole + nicotinate beta-D-ribonucleotide = alpha-ribazole 5'-phosphate + nicotinate + H(+). It participates in nucleoside biosynthesis; alpha-ribazole biosynthesis; alpha-ribazole from 5,6-dimethylbenzimidazole: step 1/2. Its function is as follows. Catalyzes the synthesis of alpha-ribazole-5'-phosphate from nicotinate mononucleotide (NAMN) and 5,6-dimethylbenzimidazole (DMB). This chain is Nicotinate-nucleotide--dimethylbenzimidazole phosphoribosyltransferase, found in Salinispora tropica (strain ATCC BAA-916 / DSM 44818 / JCM 13857 / NBRC 105044 / CNB-440).